A 70-amino-acid chain; its full sequence is MPGIKVREGDAFDEAYRRFKKQTDRNLVVTECRARRFFESKTEKHKKQKISAKKKILKRLYMLRRYESRL.

It belongs to the bacterial ribosomal protein bS21 family.

The sequence is that of Small ribosomal subunit protein bS21 from Helicobacter acinonychis (strain Sheeba).